Here is a 120-residue protein sequence, read N- to C-terminus: NAD(P)H-quinone oxidoreductase subunit 3 (120 aa).

Helical transmembrane passes span 2–22, 64–84, and 89–109; these read FVLS…LVPI, MFAL…PWAV, and LGLL…IALV.

This sequence belongs to the complex I subunit 3 family. As to quaternary structure, NDH-1 can be composed of about 15 different subunits; different subcomplexes with different compositions have been identified which probably have different functions.

It localises to the cellular thylakoid membrane. It carries out the reaction a plastoquinone + NADH + (n+1) H(+)(in) = a plastoquinol + NAD(+) + n H(+)(out). The enzyme catalyses a plastoquinone + NADPH + (n+1) H(+)(in) = a plastoquinol + NADP(+) + n H(+)(out). In terms of biological role, NDH-1 shuttles electrons from an unknown electron donor, via FMN and iron-sulfur (Fe-S) centers, to quinones in the respiratory and/or the photosynthetic chain. The immediate electron acceptor for the enzyme in this species is believed to be plastoquinone. Couples the redox reaction to proton translocation, and thus conserves the redox energy in a proton gradient. Cyanobacterial NDH-1 also plays a role in inorganic carbon-concentration. This is NAD(P)H-quinone oxidoreductase subunit 3 from Picosynechococcus sp. (strain ATCC 27264 / PCC 7002 / PR-6) (Agmenellum quadruplicatum).